A 129-amino-acid polypeptide reads, in one-letter code: Iron-sulfur cluster assembly 1 homolog, mitochondrial (129 aa).

A mitochondrion-targeting transit peptide spans 1-12 (MSASIARATVRA). Positions 57, 121, and 123 each coordinate Fe cation.

This sequence belongs to the HesB/IscA family.

The protein localises to the mitochondrion. Involved in the maturation of mitochondrial 4Fe-4S proteins functioning late in the iron-sulfur cluster assembly pathway. Probably involved in the binding of an intermediate of Fe/S cluster assembly. The polypeptide is Iron-sulfur cluster assembly 1 homolog, mitochondrial (isca1) (Danio rerio (Zebrafish)).